The primary structure comprises 412 residues: Serine hydroxymethyltransferase (412 aa).

(6S)-5,6,7,8-tetrahydrofolate contacts are provided by residues Leu117 and 121–123 (GHL). N6-(pyridoxal phosphate)lysine is present on Lys226.

This sequence belongs to the SHMT family. In terms of assembly, homodimer. Pyridoxal 5'-phosphate is required as a cofactor.

It is found in the cytoplasm. The catalysed reaction is (6R)-5,10-methylene-5,6,7,8-tetrahydrofolate + glycine + H2O = (6S)-5,6,7,8-tetrahydrofolate + L-serine. Its pathway is one-carbon metabolism; tetrahydrofolate interconversion. The protein operates within amino-acid biosynthesis; glycine biosynthesis; glycine from L-serine: step 1/1. Its function is as follows. Catalyzes the reversible interconversion of serine and glycine with tetrahydrofolate (THF) serving as the one-carbon carrier. This reaction serves as the major source of one-carbon groups required for the biosynthesis of purines, thymidylate, methionine, and other important biomolecules. Also exhibits THF-independent aldolase activity toward beta-hydroxyamino acids, producing glycine and aldehydes, via a retro-aldol mechanism. The protein is Serine hydroxymethyltransferase of Staphylococcus aureus (strain MW2).